We begin with the raw amino-acid sequence, 107 residues long: Class I hydrophobin hgfI (107 aa).

A signal peptide spans 1–24 (MFSKLAIFATAAFAVLAAATPVRR). Cystine bridges form between cysteine 27–cysteine 88, cysteine 34–cysteine 82, cysteine 35–cysteine 68, and cysteine 89–cysteine 102.

This sequence belongs to the fungal hydrophobin family. Self-assembles to form functional amyloid fibrils called rodlets with a length range 100-150 nm. Self-assembly into fibrillar rodlets occurs spontaneously at hydrophobic:hydrophilic interfaces and the rodlets further associate laterally to form amphipathic monolayers. As to expression, only weekly expressed in hyphae cultured in liquid medium.

Its subcellular location is the secreted. The protein localises to the cell wall. Its function is as follows. Aerial growth, conidiation, and dispersal of filamentous fungi in the environment rely upon a capability of their secreting small amphipathic proteins called hydrophobins (HPBs) with low sequence identity. Class I can self-assemble into an outermost layer of rodlet bundles on aerial cell surfaces, conferring cellular hydrophobicity that supports fungal growth, development and dispersal; whereas Class II form highly ordered films at water-air interfaces through intermolecular interactions but contribute nothing to the rodlet structure. HgfI is a class I hydrophobin that is involved in cell surface hydrophobicity and lowers the surface tension of water and change the nature of the surfaces to which it adsorbs. This is Class I hydrophobin hgfI from Grifola frondosa (Maitake).